The chain runs to 290 residues: D-tagatose-1,6-bisphosphate aldolase subunit KbaY (290 aa).

The Proton donor role is filled by aspartate 82. The Zn(2+) site is built by histidine 83 and histidine 180. Glycine 181 serves as a coordination point for dihydroxyacetone phosphate. Histidine 208 provides a ligand contact to Zn(2+). Dihydroxyacetone phosphate-binding positions include 209-211 and 230-233; these read GAS and NVAT.

This sequence belongs to the class II fructose-bisphosphate aldolase family. TagBP aldolase KbaY subfamily. Homotetramer. Forms a complex with KbaZ. The cofactor is Zn(2+).

The enzyme catalyses D-tagatofuranose 1,6-bisphosphate = D-glyceraldehyde 3-phosphate + dihydroxyacetone phosphate. The protein operates within carbohydrate metabolism; D-tagatose 6-phosphate degradation; D-glyceraldehyde 3-phosphate and glycerone phosphate from D-tagatose 6-phosphate: step 2/2. In terms of biological role, catalytic subunit of the tagatose-1,6-bisphosphate aldolase KbaYZ, which catalyzes the reversible aldol condensation of dihydroxyacetone phosphate (DHAP or glycerone-phosphate) with glyceraldehyde 3-phosphate (G3P) to produce tagatose 1,6-bisphosphate (TBP). Requires KbaZ subunit for full activity and stability. The sequence is that of D-tagatose-1,6-bisphosphate aldolase subunit KbaY from Citrobacter koseri (strain ATCC BAA-895 / CDC 4225-83 / SGSC4696).